Consider the following 90-residue polypeptide: Sakacin-A immunity factor (90 aa).

Functionally, imparts immunity to sakacin-A to naturally sensitive host strains. In Latilactobacillus sakei (Lactobacillus sakei), this protein is Sakacin-A immunity factor (saiA).